The following is a 472-amino-acid chain: PEP-dependent dihydroxyacetone kinase, phosphoryl donor subunit DhaM (472 aa).

The PTS EIIA type-4 domain occupies 1-135 (MVNLVIVSHS…NALEAKRVQL (135 aa)). H9 acts as the Tele-phosphohistidine intermediate in catalysis. Residues 156-243 (ARSVSVVIQN…ALAAENFGEP (88 aa)) form the HPr domain. The Pros-phosphohistidine intermediate role is filled by H170. The PTS EI-like, N-terminal part stretch occupies residues 266–472 (PQPQDRISRE…DIPGKRVIRG (207 aa)). H432 (tele-phosphohistidine intermediate) is an active-site residue.

This sequence belongs to the PEP-utilizing enzyme family. Homodimer. The dihydroxyacetone kinase complex is composed of a homodimer of DhaM, a homodimer of DhaK and the subunit DhaL.

The enzyme catalyses dihydroxyacetone + phosphoenolpyruvate = dihydroxyacetone phosphate + pyruvate. Component of the dihydroxyacetone kinase complex, which is responsible for the phosphoenolpyruvate (PEP)-dependent phosphorylation of dihydroxyacetone. DhaM serves as the phosphoryl donor. Is phosphorylated by phosphoenolpyruvate in an EI- and HPr-dependent reaction, and a phosphorelay system on histidine residues finally leads to phosphoryl transfer to DhaL and dihydroxyacetone. The protein is PEP-dependent dihydroxyacetone kinase, phosphoryl donor subunit DhaM of Klebsiella michiganensis (strain ATCC 8724 / DSM 4798 / JCM 20051 / NBRC 3318 / NRRL B-199 / KCTC 1686 / BUCSAV 143 / CCM 1901).